A 269-amino-acid polypeptide reads, in one-letter code: Hydroxyethylthiazole kinase (269 aa).

Methionine 45 lines the substrate pocket. ATP is bound by residues arginine 121 and threonine 167. Position 194 (glycine 194) interacts with substrate.

The protein belongs to the Thz kinase family. The cofactor is Mg(2+).

It carries out the reaction 5-(2-hydroxyethyl)-4-methylthiazole + ATP = 4-methyl-5-(2-phosphooxyethyl)-thiazole + ADP + H(+). The protein operates within cofactor biosynthesis; thiamine diphosphate biosynthesis; 4-methyl-5-(2-phosphoethyl)-thiazole from 5-(2-hydroxyethyl)-4-methylthiazole: step 1/1. Functionally, catalyzes the phosphorylation of the hydroxyl group of 4-methyl-5-beta-hydroxyethylthiazole (THZ). The polypeptide is Hydroxyethylthiazole kinase (Bacillus cytotoxicus (strain DSM 22905 / CIP 110041 / 391-98 / NVH 391-98)).